An 888-amino-acid polypeptide reads, in one-letter code: Alanine--tRNA ligase (888 aa).

The Zn(2+) site is built by His-564, His-568, Cys-676, and His-680.

The protein belongs to the class-II aminoacyl-tRNA synthetase family. Zn(2+) serves as cofactor.

Its subcellular location is the cytoplasm. It carries out the reaction tRNA(Ala) + L-alanine + ATP = L-alanyl-tRNA(Ala) + AMP + diphosphate. Catalyzes the attachment of alanine to tRNA(Ala) in a two-step reaction: alanine is first activated by ATP to form Ala-AMP and then transferred to the acceptor end of tRNA(Ala). Also edits incorrectly charged Ser-tRNA(Ala) and Gly-tRNA(Ala) via its editing domain. This is Alanine--tRNA ligase from Bartonella tribocorum (strain CIP 105476 / IBS 506).